The sequence spans 218 residues: Ras-related protein Rab-11B (218 aa).

At Gly2 the chain carries N-acetylglycine. The GTP site is built by Ser20, Gly21, Gly23, Lys24, Ser25, Asn26, Asn37, Leu38, Ser40, Ser42, and Thr43. Ser25 contributes to the Mg(2+) binding site. Positions 36 to 47 (FNLESKSTIGVE) match the Switch 1 motif. Positions 43 and 66 each coordinate Mg(2+). A Switch 2 motif is present at residues 67–86 (TAGQERYRAITSAYYRGAVG). GTP is bound by residues Gly69, Asn124, Lys125, Asp127, Ala155, and Leu156. A disordered region spans residues 183–218 (DRSAHDESPGNNVVDISVPPTTDGQKSNKLQCCQNM). The segment covering 201–218 (PPTTDGQKSNKLQCCQNM) has biased composition (polar residues). 2 S-geranylgeranyl cysteine lipidation sites follow: Cys214 and Cys215. Cys215 is modified (cysteine methyl ester). The propeptide at 216 to 218 (QNM) is removed in mature form.

The protein belongs to the small GTPase superfamily. Rab family. It depends on Mg(2+) as a cofactor.

The protein resides in the recycling endosome membrane. It localises to the cytoplasmic vesicle. It is found in the secretory vesicle. Its subcellular location is the synaptic vesicle membrane. The protein localises to the phagosome membrane. It catalyses the reaction GTP + H2O = GDP + phosphate + H(+). With respect to regulation, regulated by guanine nucleotide exchange factors (GEFs) which promote the exchange of bound GDP for free GTP. Regulated by GTPase activating proteins (GAPs) which increase the GTP hydrolysis activity. Inhibited by GDP dissociation inhibitors (GDIs) which prevent Rab-GDP dissociation. In terms of biological role, the small GTPases Rab are key regulators of intracellular membrane trafficking, from the formation of transport vesicles to their fusion with membranes. Rabs cycle between an inactive GDP-bound form and an active GTP-bound form that is able to recruit to membranes different set of downstream effectors directly responsible for vesicle formation, movement, tethering and fusion. That Rab plays a role in endocytic recycling, regulating apical recycling of several transmembrane proteins including cystic fibrosis transmembrane conductance regulator/CFTR, epithelial sodium channel/ENaC, potassium voltage-gated channel, and voltage-dependent L-type calcium channel. May also regulate constitutive and regulated secretion, like insulin granule exocytosis. Required for melanosome transport and release from melanocytes. Also regulates V-ATPase intracellular transport in response to extracellular acidosis. The protein is Ras-related protein Rab-11B of Diplobatis ommata (Ocellated electric ray).